The following is a 427-amino-acid chain: Homoserine O-acetyltransferase FUB5 (427 aa).

The segment covering 1-13 (MTTTTTAPALPTP) has biased composition (low complexity). The disordered stretch occupies residues 1–35 (MTTTTTAPALPTPIHDGLGNGTTYERSIPRPVNPF). The AB hydrolase-1 domain occupies 77–400 (NVMIICHALS…VSDDGHDAFL (324 aa)). Residue serine 175 is the Nucleophile of the active site. A disordered region spans residues 260 to 297 (RFGRDTGNKKKAKNKGSETLPSNSTPIHSQGGADETPV). Positions 276–287 (SETLPSNSTPIH) are enriched in polar residues. Active-site residues include aspartate 367 and histidine 396.

The protein belongs to the AB hydrolase superfamily. MetX family.

The enzyme catalyses L-homoserine + acetyl-CoA = O-acetyl-L-homoserine + CoA. Its pathway is mycotoxin biosynthesis. Homoserine O-acetyltransferase; part of the gene cluster that mediates the biosynthesis of fusaric acid, a mycotoxin with low to moderate toxicity to animals and humans, but with high phytotoxic properties. L-aspartate is suggested as fusaric acid amino acid precursor that is activated and further processed to O-acetyl-L-homoserine by cluster enzymes aspartate kinase FUB3 and homoserine O-acetyltransferase FUB5, as well as enzymes of the primary metabolism. The polyketide synthase (PKS) FUB1 generates the triketide trans-2-hexenal which is presumptively released by the hydrolase FUB4 and linked to the NRPS-bound amino acid precursor by NAD(P)-dependent dehydrogenase FUB6. FUB1, FUB4, and the non-canonical NRPS Fub8 may form an enzyme complex. Further processing of the NRPS-bound intermediate might be carried out by FUB6 and the sulfhydrylase FUB7, enabling a spontaneous electrocyclization to close the carbon backbone of fusaric acid. Dihydrofusaric acid is likely to be released via reduction by the thioester reductase (TR) domain of FUB8 whereupon the final oxidation to fusaric acid may (also) be performed by the FMN-dependent dehydrogenase FUB9. The chain is Homoserine O-acetyltransferase FUB5 from Gibberella fujikuroi (strain CBS 195.34 / IMI 58289 / NRRL A-6831) (Bakanae and foot rot disease fungus).